The following is a 213-amino-acid chain: Uridine kinase (213 aa).

15 to 22 contributes to the ATP binding site; sequence GASASGKS.

This sequence belongs to the uridine kinase family.

Its subcellular location is the cytoplasm. It carries out the reaction uridine + ATP = UMP + ADP + H(+). It catalyses the reaction cytidine + ATP = CMP + ADP + H(+). Its pathway is pyrimidine metabolism; CTP biosynthesis via salvage pathway; CTP from cytidine: step 1/3. It functions in the pathway pyrimidine metabolism; UMP biosynthesis via salvage pathway; UMP from uridine: step 1/1. In Escherichia coli O157:H7, this protein is Uridine kinase.